The following is a 372-amino-acid chain: PqqA peptide cyclase (372 aa).

The Radical SAM core domain occupies 4 to 220 (APPPLSVLLE…ETARRQLGDR (217 aa)). Residues Cys-18, Cys-22, and Cys-25 each coordinate [4Fe-4S] cluster.

Belongs to the radical SAM superfamily. PqqE family. As to quaternary structure, interacts with PqqD. The interaction is necessary for activity of PqqE. [4Fe-4S] cluster is required as a cofactor.

It carries out the reaction [PQQ precursor protein] + S-adenosyl-L-methionine = E-Y cross-linked-[PQQ precursor protein] + 5'-deoxyadenosine + L-methionine + H(+). It functions in the pathway cofactor biosynthesis; pyrroloquinoline quinone biosynthesis. Catalyzes the cross-linking of a glutamate residue and a tyrosine residue in the PqqA protein as part of the biosynthesis of pyrroloquinoline quinone (PQQ). The polypeptide is PqqA peptide cyclase (Xanthomonas axonopodis pv. citri (strain 306)).